Consider the following 87-residue polypeptide: Small ribosomal subunit protein uS15c (87 aa).

Belongs to the universal ribosomal protein uS15 family. Part of the 30S ribosomal subunit.

It localises to the plastid. Its subcellular location is the chloroplast. The protein is Small ribosomal subunit protein uS15c (rps15) of Oenothera argillicola (Appalachian evening primrose).